The following is a 351-amino-acid chain: Nicotinate-nucleotide--dimethylbenzimidazole phosphoribosyltransferase (351 aa).

The active-site Proton acceptor is the E315.

Belongs to the CobT family.

It catalyses the reaction 5,6-dimethylbenzimidazole + nicotinate beta-D-ribonucleotide = alpha-ribazole 5'-phosphate + nicotinate + H(+). The protein operates within nucleoside biosynthesis; alpha-ribazole biosynthesis; alpha-ribazole from 5,6-dimethylbenzimidazole: step 1/2. Catalyzes the synthesis of alpha-ribazole-5'-phosphate from nicotinate mononucleotide (NAMN) and 5,6-dimethylbenzimidazole (DMB). This Acetivibrio thermocellus (strain ATCC 27405 / DSM 1237 / JCM 9322 / NBRC 103400 / NCIMB 10682 / NRRL B-4536 / VPI 7372) (Clostridium thermocellum) protein is Nicotinate-nucleotide--dimethylbenzimidazole phosphoribosyltransferase.